A 262-amino-acid polypeptide reads, in one-letter code: Small ribosomal subunit protein eS4 (262 aa).

The 64-residue stretch at 42-105 (LPLIIMLRNR…GEFFRLLYDV (64 aa)) folds into the S4 RNA-binding domain.

This sequence belongs to the eukaryotic ribosomal protein eS4 family.

This is Small ribosomal subunit protein eS4 (RpS4) from Ixodes scapularis (Black-legged tick).